Consider the following 419-residue polypeptide: Transcription termination factor Rho (419 aa).

Residues 48 to 123 (DIFGDGVLEI…LKVNEVNYDK (76 aa)) enclose the Rho RNA-BD domain. 3 RNA-binding regions span residues 61–66 (GFGFLR), 78–80 (DIY), and 108–110 (ERY). ATP is bound by residues 169–174 (GRGQRG), 181–186 (KAGKTI), and R212. The tract at residues 284–288 (VLTGG) is RNA-binding 2.

It belongs to the Rho family. In terms of assembly, homohexamer. The homohexamer assembles into an open ring structure.

Facilitates transcription termination by a mechanism that involves Rho binding to the nascent RNA, activation of Rho's RNA-dependent ATPase activity, and release of the mRNA from the DNA template. In Buchnera aphidicola subsp. Acyrthosiphon pisum (strain APS) (Acyrthosiphon pisum symbiotic bacterium), this protein is Transcription termination factor Rho.